A 296-amino-acid chain; its full sequence is CDP-diacylglycerol--glycerol-3-phosphate 3-phosphatidyltransferase 1, chloroplastic/mitochondrial (296 aa).

Residues 1 to 39 (MLRSGLASLIVDVNLRRTLRPSPTFSFPAHLSRCIITSR) constitute a chloroplast and mitochondrion transit peptide. Residues 62-82 (FSSSSSSEQSRPTSSSRNSFS) are compositionally biased toward low complexity. Positions 62 to 103 (FSSSSSSEQSRPTSSSRNSFSGHGQLDSDDNSSPPPSQSSSK) are disordered. A run of 5 helical transmembrane segments spans residues 104 to 124 (VLTL…LLVA), 126 to 146 (FYVD…AAAI), 164 to 184 (FGAF…LILL), 189 to 209 (IQVA…IAII), and 261 to 281 (VGWL…LSVW).

Belongs to the CDP-alcohol phosphatidyltransferase class-I family. It depends on Mn(2+) as a cofactor.

It localises to the plastid. It is found in the chloroplast membrane. The protein resides in the mitochondrion membrane. It carries out the reaction a CDP-1,2-diacyl-sn-glycerol + sn-glycerol 3-phosphate = a 1,2-diacyl-sn-glycero-3-phospho-(1'-sn-glycero-3'-phosphate) + CMP + H(+). The protein operates within phospholipid metabolism; phosphatidylglycerol biosynthesis; phosphatidylglycerol from CDP-diacylglycerol: step 1/2. Its function is as follows. Catalyzes the committed step to the synthesis of the acidic phospholipids, including phosphatidylglycerol (PG). Transfers specifically a phosphatidyl group from CDP-diacylglycerol to glycerol-3-phosphate to form phosphatidylglycerophosphate. Cannot catalyze the phosphatidyl group transfer to inositol, serine, choline or phosphatidylglycerol. Possesses high activity with CDP-dipalmitoylglycerol and low activity with CDP-dioleoylglycerol. Essential for chloroplast differentiation and PG accumulation in thylakoids, an essential process for the assembly of antenna-reaction center complexes to optimize energy transfer from antenna pigments, and for subsequent photochemical efficiency of photosystem II (PSII). During cold acclimation (at 5 degrees Celsius), necessary for the photosystem I (PSI) photochemistry, including both reaction center and light-harvesting integrity. But dispensable in mitochondrion, being redundant with PGPS2 for the production of PG and its derivative cardiolipin (CL) in mitochondrial membranes. Together with PGPS2, required for the proper embryo development by providing PG accurate levels. The chain is CDP-diacylglycerol--glycerol-3-phosphate 3-phosphatidyltransferase 1, chloroplastic/mitochondrial from Arabidopsis thaliana (Mouse-ear cress).